The sequence spans 170 residues: Elicitin-like protein 1 (170 aa).

The first 19 residues, 1–19 (MFSKTLVVLAAVAAVTVNG), serve as a signal peptide directing secretion. Intrachain disulfides connect C25/C91, C47/C76, and C71/C118. Positions 122-170 (GGGSTPTTAPPTSTTPTTAPPTGTTPTTAPPAGTTPGVTPSPTTPKPAC) are disordered. A compositionally biased stretch (low complexity) spans 126–162 (TPTTAPPTSTTPTTAPPTGTTPTTAPPAGTTPGVTPS).

Belongs to the elicitin family.

Its subcellular location is the secreted. In terms of biological role, induces local and distal defense responses (incompatible hypersensitive reaction) in plants from the solanaceae and cruciferae families. Elicits leaf necrosis and causes the accumulation of pathogenesis-related proteins. Might interact with the lipidic molecules of the plasma membrane. In Pythium oligandrum (Mycoparasitic fungus), this protein is Elicitin-like protein 1 (POD-1).